We begin with the raw amino-acid sequence, 118 residues long: NADH-ubiquinone oxidoreductase chain 3 (118 aa).

Transmembrane regions (helical) follow at residues 1-21 (MLFF…VLVF), 59-79 (YTYF…SLLL), and 86-106 (VLYK…IGFL).

It belongs to the complex I subunit 3 family.

The protein resides in the mitochondrion membrane. It catalyses the reaction a ubiquinone + NADH + 5 H(+)(in) = a ubiquinol + NAD(+) + 4 H(+)(out). Core subunit of the mitochondrial membrane respiratory chain NADH dehydrogenase (Complex I) that is believed to belong to the minimal assembly required for catalysis. Complex I functions in the transfer of electrons from NADH to the respiratory chain. The immediate electron acceptor for the enzyme is believed to be ubiquinone. This chain is NADH-ubiquinone oxidoreductase chain 3 (ND3), found in Fasciola hepatica (Liver fluke).